We begin with the raw amino-acid sequence, 380 residues long: uncharacterized protein (380 aa).

Residues Leu287 to Gly318 enclose the 4Fe-4S ferredoxin-type domain.

This is an uncharacterized protein from Methanocaldococcus jannaschii (strain ATCC 43067 / DSM 2661 / JAL-1 / JCM 10045 / NBRC 100440) (Methanococcus jannaschii).